The sequence spans 704 residues: Glycine--tRNA ligase beta subunit (704 aa).

It belongs to the class-II aminoacyl-tRNA synthetase family. In terms of assembly, tetramer of two alpha and two beta subunits.

The protein localises to the cytoplasm. The catalysed reaction is tRNA(Gly) + glycine + ATP = glycyl-tRNA(Gly) + AMP + diphosphate. In Rhizobium etli (strain CIAT 652), this protein is Glycine--tRNA ligase beta subunit.